Consider the following 324-residue polypeptide: Homoserine kinase (324 aa).

87 to 97 (PVARGMGSSAA) is a binding site for ATP.

It belongs to the GHMP kinase family. Homoserine kinase subfamily.

It localises to the cytoplasm. It catalyses the reaction L-homoserine + ATP = O-phospho-L-homoserine + ADP + H(+). It functions in the pathway amino-acid biosynthesis; L-threonine biosynthesis; L-threonine from L-aspartate: step 4/5. Functionally, catalyzes the ATP-dependent phosphorylation of L-homoserine to L-homoserine phosphate. The chain is Homoserine kinase from Symbiobacterium thermophilum (strain DSM 24528 / JCM 14929 / IAM 14863 / T).